A 143-amino-acid polypeptide reads, in one-letter code: Hemoglobin subunit alpha (143 aa).

The region spanning 3 to 143 is the Globin domain; that stretch reads KLSGEDKANV…TMRLCISKYR (141 aa). His-60 contacts O2. His-89 serves as a coordination point for heme b.

The protein belongs to the globin family. In terms of assembly, heterotetramer of two alpha chains and two beta chains. Red blood cells.

Functionally, involved in oxygen transport from the lung to the various peripheral tissues. This is Hemoglobin subunit alpha (HBA) from Ambystoma mexicanum (Axolotl).